We begin with the raw amino-acid sequence, 568 residues long: MDQDAFFFERDPEAEGEAPRKQESLSDVIGLLDVVLSYKPTEIGEDRSWLHGIIDNPKENKPSCKADDNNKDRAISTPTQDHRSGEESGISRRTSESKTETHARILDQQGIHRASRRGTSPNPLPENMGNERNTRIDEDSPNERRHQRSVLTDEDRKMAEDSNKREEDQVEGFPEEIRRSTPLSDDGESRTNNNGRSMETSSTHSTRITDVIINPSPELEDAVLQRNKRRPTIIRRNQTRSERTQNSELHKSTSENSSNLEDHNTKTSPKGPPPKNEESAATPKNNHNHRKTKYTMNNANNNTKSPPTPEHDTTANEEETSNTSVDEMAKLLVSLGVMKSQHEFELSRSASHVFAKRMLKSANYKEMTFNLCGMLISVEKSLENKVEENRTLLKQIQEEINSSRDLHKRFSEYQKEQNSLMMANLSTLHIITDRGGKTGDPSDTTRSPSVFTKGKDNKVKKTRFDPSMEALGGQEFKPDLIREDELRDDIKNPVLEENNNDLQASNASRLIPSTEKHTLHSLKLVIENSPLSRVEKKAYIKSLYKCRTNQEVKNVMELFEEDIDSLTN.

Residues 1 to 24 (MDQDAFFFERDPEAEGEAPRKQES) form a disordered region. Residues 7-24 (FFERDPEAEGEAPRKQES) show a composition bias toward basic and acidic residues. Positions 33-41 (DVVLSYKPT) are N0 binding. The interval 45-324 (EDRSWLHGII…ANEEETSNTS (280 aa)) is disordered. 3 stretches are compositionally biased toward basic and acidic residues: residues 56-105 (NPKE…HARI), 132-144 (RNTR…PNER), and 151-167 (LTDE…KREE). A compositionally biased stretch (polar residues) spans 190–208 (RTNNNGRSMETSSTHSTRI). The span at 239-253 (TRSERTQNSELHKST) shows a compositional bias: basic and acidic residues. A compositionally biased stretch (polar residues) spans 294 to 305 (YTMNNANNNTKS). Residues 344–411 (FELSRSASHV…SSRDLHKRFS (68 aa)) form a multimerization region. Residues 387–416 (EENRTLLKQIQEEINSSRDLHKRFSEYQKE) adopt a coiled-coil conformation. The segment at 412–445 (EYQKEQNSLMMANLSTLHIITDRGGKTGDPSDTT) is l protein binding. The interval 434–455 (RGGKTGDPSDTTRSPSVFTKGK) is disordered. Positions 441–450 (PSDTTRSPSV) are enriched in polar residues. Positions 479 to 568 (DLIREDELRD…FEEDIDSLTN (90 aa)) are interaction with the nucleocapsid (N-RNA).

It belongs to the respirovirus P protein family. In terms of assembly, homotetramer. Interacts (via multimerization domain) with polymerase L; this interaction forms the polymerase complex. Interacts (via N-terminus) with N0; this interaction allows P to chaperon N0 before encapsidation and form the N-P complex. Interacts (via C-terminus) with N-RNA template; this interaction positions the polymerase on the template.

Functionally, essential cofactor of the RNA polymerase L that plays a central role in the transcription and replication by forming the polymerase complex with RNA polymerase L and recruiting L to the genomic N-RNA template for RNA synthesis. Also plays a central role in the encapsidation of nascent RNA chains by forming the encapsidation complex with the nucleocapsid protein N (N-P complex). Acts as a chaperone for newly synthesized free N protein, so-called N0, allowing encapsidation of nascent RNA chains during replication. The nucleoprotein protein N prevents excessive phosphorylation of P, which leads to down-regulation of viral transcription/ replication. Participates, together with N, in the formation of viral factories (viroplasms), which are large inclusions in the host cytoplasm where replication takes place. Recruits host PI4KB and remodel the host endoplasmic reticulum membrane to form viral replication factories. This chain is Phosphoprotein (P/C), found in Human parainfluenza 1 virus (strain C35) (HPIV-1).